A 147-amino-acid polypeptide reads, in one-letter code: uncharacterized protein (147 aa).

Disordered stretches follow at residues 1-49 (MRTP…NLNE) and 125-147 (SPSPTTSFNSTNPQNTHQTRKSN). 2 stretches are compositionally biased toward low complexity: residues 8–49 (NNNY…NLNE) and 125–140 (SPSPTTSFNSTNPQNT).

This is an uncharacterized protein from Dictyostelium discoideum (Social amoeba).